The chain runs to 267 residues: N-formylglutamate deformylase (267 aa).

This sequence belongs to the N-formylglutamate deformylase family. In terms of assembly, monomer.

It catalyses the reaction N-formyl-L-glutamate + H2O = formate + L-glutamate. The protein operates within amino-acid degradation; L-histidine degradation into L-glutamate; L-glutamate from N-formimidoyl-L-glutamate (deiminase route): step 2/2. Its activity is regulated as follows. Stimulated by Co(2+). Fe(2+) is also a good activator, particularly at lower concentrations, but it inhibits slightly the activity when used at concentrations over 0.1 mM. Other divalent metals tested (Cd(2+), Ca(2+), Mn(2+), Zn(2+), Ni(2+) and Mg(2+)) are not effective activators. Catalyzes the hydrolysis of N-formyl-L-glutamate to formate and L-glutamate. The sequence is that of N-formylglutamate deformylase from Pseudomonas putida (Arthrobacter siderocapsulatus).